A 372-amino-acid polypeptide reads, in one-letter code: 4-hydroxy-3-methylbut-2-en-1-yl diphosphate synthase (flavodoxin) (372 aa).

Residues C270, C273, C305, and E312 each coordinate [4Fe-4S] cluster.

Belongs to the IspG family. [4Fe-4S] cluster serves as cofactor.

The catalysed reaction is (2E)-4-hydroxy-3-methylbut-2-enyl diphosphate + oxidized [flavodoxin] + H2O + 2 H(+) = 2-C-methyl-D-erythritol 2,4-cyclic diphosphate + reduced [flavodoxin]. Its pathway is isoprenoid biosynthesis; isopentenyl diphosphate biosynthesis via DXP pathway; isopentenyl diphosphate from 1-deoxy-D-xylulose 5-phosphate: step 5/6. Its function is as follows. Converts 2C-methyl-D-erythritol 2,4-cyclodiphosphate (ME-2,4cPP) into 1-hydroxy-2-methyl-2-(E)-butenyl 4-diphosphate. This is 4-hydroxy-3-methylbut-2-en-1-yl diphosphate synthase (flavodoxin) from Escherichia coli O9:H4 (strain HS).